Reading from the N-terminus, the 259-residue chain is Type III pantothenate kinase (259 aa).

Position 6-13 (6-13 (DVGNTNIV)) interacts with ATP. Residues tyrosine 100 and 107-110 (GADR) each bind substrate. Aspartate 109 acts as the Proton acceptor in catalysis. Aspartate 129 is a K(+) binding site. Threonine 132 is a binding site for ATP. Threonine 184 serves as a coordination point for substrate.

It belongs to the type III pantothenate kinase family. As to quaternary structure, homodimer. It depends on NH4(+) as a cofactor. K(+) serves as cofactor.

The protein resides in the cytoplasm. The catalysed reaction is (R)-pantothenate + ATP = (R)-4'-phosphopantothenate + ADP + H(+). Its pathway is cofactor biosynthesis; coenzyme A biosynthesis; CoA from (R)-pantothenate: step 1/5. Its function is as follows. Catalyzes the phosphorylation of pantothenate (Pan), the first step in CoA biosynthesis. The sequence is that of Type III pantothenate kinase from Clostridium kluyveri (strain NBRC 12016).